The primary structure comprises 620 residues: MPPSSKSRRLPPAASDSAASDAQKRRKNVGTACSACKARKLKCTGAPPCANCVKSRIECTLDETADRRRRGVLKRKIDKLEDQEDLLGRLLEFFREGNNRCTIPLLNLIRSHASPPEIRFYIEHQLPLSKRTQTPELIEVCREIEQRHSFEPLPKRHILDTTPNGSHDTPRLSVPAQPWTSIITDDGLVSRLIFLWFTWVHPFCNFIDRDRFIRDMKSGSLSASYCSPLLVNIILSDACHSASGLPDDLTSKRIEFYEEAERLLDKEEGRISLPTAQGLGVLWMCASITGRDRQAWIKGTQLAYSLRELSQVSCNLPSEANRDATALATIVNSTNWGLFNVAMVHALFARKRPIIEPPAQPPSVSNQCDHGMWYSYPNKSTGVESHTSCLFTAACNLNRIAYNLGRFLFSQEKKSSARLDLTDGELDALRDLNEWADQLPVCLKESIADLPHVLSLHMYNHAILTVVYGFLRTRPLYLPNPSASTPTVRDALMSPARAWAASLSSARKIAHLTLVHRANWGSDRMPGATVHCIMAALFALLDSVDDPANRDAFISLTAAAAAFSRRWESPIALLRNIQNIARQRDVTLPPETGAFFLDPDQPSGNSTPIKSETPEGTAIS.

The segment at 1-26 (MPPSSKSRRLPPAASDSAASDAQKRR) is disordered. Residues 33-59 (CSACKARKLKCTGAPPCANCVKSRIEC) constitute a DNA-binding region (zn(2)-C6 fungal-type). The tract at residues 591 to 620 (ETGAFFLDPDQPSGNSTPIKSETPEGTAIS) is disordered.

It is found in the nucleus. Functionally, transcription factor that probably regulates the expression of the gene cluster that mediates the biosynthesis of notoamide, a fungal indole alkaloid that belongs to a family of natural products containing a characteristic bicyclo[2.2.2]diazaoctane core. This chain is Notoamide biosynthesis transcriptional activator notL', found in Aspergillus versicolor.